A 982-amino-acid chain; its full sequence is Capsid protein (982 aa).

Disordered stretches follow at residues 592-613 and 628-655; these read VFRS…RWLT and EPPA…HEEE. A compositionally biased stretch (basic and acidic residues) spans 597-613; sequence PRRESTTTTDDSPRWLT. A compositionally biased stretch (polar residues) spans 635-649; sequence GRSSSPVTSSISEGT.

Homomultimer.

The protein localises to the virion. Functionally, capsid protein self-assembles to form an icosahedral capsid with a T=1 symmetry, about 35-40 nm in diameter. The polypeptide is Capsid protein (p2) (Penicillium chrysogenum virus (isolate Caston/2003) (PcV)).